We begin with the raw amino-acid sequence, 984 residues long: Serine/threonine-protein kinase Nek9 (984 aa).

Ser2 carries the post-translational modification N-acetylserine. 4 positions are modified to phosphoserine: Ser2, Ser13, Ser16, and Ser20. A disordered region spans residues 14-43 (INSDFGSESGGGGDSGPGPSAVPGPRAGGG). At Tyr52 the chain carries Phosphotyrosine. The Protein kinase domain occupies 52–308 (YIPIRVLGRG…ADALLDLPLL (257 aa)). 58 to 66 (LGRGAFGEA) is a binding site for ATP. Ser76 carries the phosphoserine modification. Position 81 (Lys81) interacts with ATP. Asp176 acts as the Proton acceptor in catalysis. Thr210 is subject to Phosphothreonine; by autocatalysis. At Thr254 the chain carries Phosphothreonine. Ser331 carries the phosphoserine modification. Thr333 carries the post-translational modification Phosphothreonine. RCC1 repeat units lie at residues 388 to 444 (KELY…VTDE), 445 to 498 (GQLY…LTRN), 499 to 550 (KEVY…LTQS), 551 to 615 (GKVL…IDER), 616 to 668 (GRLL…ATDD), and 669 to 726 (NHIF…IVEK). The tract at residues 732–896 (TIRSNSSGLS…GKALTSAACA (165 aa)) is interaction with NEK6. Position 741 is a phosphoserine (Ser741). Positions 744-790 (TVVQSSSPGGGIGGGGGGGGGGGGEEEDSQQESETPDPSGGFRGTME) are disordered. The span at 751-766 (PGGGIGGGGGGGGGGG) shows a compositional bias: gly residues. A compositionally biased stretch (acidic residues) spans 767-778 (GEEEDSQQESET). 2 positions are modified to phosphoserine: Ser808 and Ser839. Thr891 carries the post-translational modification Phosphothreonine. Residues 896 to 945 (ACSALQVEVDRLQALVLKCLEEQQKLQQENLQMFTQLQKLNKKLEGGQQV) adopt a coiled-coil conformation. Residues 940-984 (EGGQQVGMHSRGTQTAKEEMEMDPKPDLDSESWCLLGTDSCRPSL) form a disordered region. Ser949 bears the Phosphoserine mark. The span at 955-967 (AKEEMEMDPKPDL) shows a compositional bias: basic and acidic residues. At Ser983 the chain carries Phosphoserine.

This sequence belongs to the protein kinase superfamily. NEK Ser/Thr protein kinase family. NIMA subfamily. As to quaternary structure, homodimer; homodimerization is required to activate NEK7. Binds to Ran GTPase. Has a greater affinity for Ran-GDP over Ran-GTP. Interacts with SSRP1 and SUPT16H, the 2 subunits of the FACT complex. Interacts with DYNLL1; phosphorylation at Ser-949 strongly reduces DYNLL1 binding. Requires Mg(2+) as cofactor. Post-translationally, autophosphorylated on serine and threonine residues. When complexed with FACT, exhibits markedly elevated phosphorylation on Thr-210. During mitosis, not phosphorylated on Thr-210. Phosphorylated by CDK1 in vitro.

It is found in the cytoplasm. The protein resides in the nucleus. The enzyme catalyses L-seryl-[protein] + ATP = O-phospho-L-seryl-[protein] + ADP + H(+). It catalyses the reaction L-threonyl-[protein] + ATP = O-phospho-L-threonyl-[protein] + ADP + H(+). With respect to regulation, activated during mitosis by intramolecular autophosphorylation. Activity and autophosphorylation is activated by manganese &gt;&gt; magnesium ions. It is not cell-cycle regulated but activity is higher in G0-arrested cells. Its function is as follows. Pleiotropic regulator of mitotic progression, participating in the control of spindle dynamics and chromosome separation. Phosphorylates different histones, myelin basic protein, beta-casein, and BICD2. Phosphorylates histone H3 on serine and threonine residues and beta-casein on serine residues. Important for G1/S transition and S phase progression. Phosphorylates NEK6 and NEK7 and stimulates their activity by releasing the autoinhibitory functions of Tyr-108 and Tyr-97 respectively. This is Serine/threonine-protein kinase Nek9 from Mus musculus (Mouse).